Here is a 288-residue protein sequence, read N- to C-terminus: Acetyl-coenzyme A carboxylase carboxyl transferase subunit beta (288 aa).

Residues 33–288 form the CoA carboxyltransferase N-terminal domain; it reads LFSQCPGCKH…LVRLHGGSPR (256 aa). Zn(2+) contacts are provided by Cys-37, Cys-40, Cys-55, and Cys-58. A C4-type zinc finger spans residues 37-58; it reads CPGCKHTIYQKDLGSERICPHC.

It belongs to the AccD/PCCB family. As to quaternary structure, acetyl-CoA carboxylase is a heterohexamer composed of biotin carboxyl carrier protein (AccB), biotin carboxylase (AccC) and two subunits each of ACCase subunit alpha (AccA) and ACCase subunit beta (AccD). The cofactor is Zn(2+).

It is found in the cytoplasm. The enzyme catalyses N(6)-carboxybiotinyl-L-lysyl-[protein] + acetyl-CoA = N(6)-biotinyl-L-lysyl-[protein] + malonyl-CoA. It functions in the pathway lipid metabolism; malonyl-CoA biosynthesis; malonyl-CoA from acetyl-CoA: step 1/1. Its function is as follows. Component of the acetyl coenzyme A carboxylase (ACC) complex. Biotin carboxylase (BC) catalyzes the carboxylation of biotin on its carrier protein (BCCP) and then the CO(2) group is transferred by the transcarboxylase to acetyl-CoA to form malonyl-CoA. This Streptococcus pneumoniae serotype 4 (strain ATCC BAA-334 / TIGR4) protein is Acetyl-coenzyme A carboxylase carboxyl transferase subunit beta.